A 564-amino-acid polypeptide reads, in one-letter code: E3 ubiquitin-protein ligase TRIM16 (564 aa).

Residues 1 to 70 (MAELDLMAPG…DPAEQGDPAG (70 aa)) form a disordered region. The segment covering 24–39 (SPDSGSPSPDSGSASP) has biased composition (low complexity). B box-type zinc fingers lie at residues 72–122 (GKEV…LTEP) and 126–165 (HNWR…IVSL). A Phosphoserine modification is found at Ser116. Zn(2+)-binding residues include Cys131, His134, Cys153, and His157. 3 coiled-coil regions span residues 165-203 (LDAA…NQKS), 243-274 (AALS…RMAA), and 320-340 (HLIQ…KEEE). Ser203 is subject to Phosphoserine. A B30.2/SPRY domain is found at 355–553 (YWTSKPEPST…RIVDLGEEPE (199 aa)).

It belongs to the TRIM/RBCC family. Homodimerizes via its coiled-coil domain. Heterodimerizes with MID1, TRIM24 and PML. Interacts with Galectin-3/LGALS3 in a ULK1-dependent manner; this interaction mediates autophagy of damage endomembranes. Interacts with BECN1. Interacts with ATG16L1. Interacts with p62/SQSTM and LC3B/MAP1LC3B. Post-translationally, phosphorylated by ULK1. In terms of processing, auto-ubiquitinates via its B-Boxes.

Its subcellular location is the cytoplasm. The enzyme catalyses S-ubiquitinyl-[E2 ubiquitin-conjugating enzyme]-L-cysteine + [acceptor protein]-L-lysine = [E2 ubiquitin-conjugating enzyme]-L-cysteine + N(6)-ubiquitinyl-[acceptor protein]-L-lysine.. In terms of biological role, E3 ubiquitin ligase that plays an essential role in the organization of autophagic response and ubiquitination upon lysosomal and phagosomal damages. Plays a role in the stress-induced biogenesis and degradation of protein aggresomes by regulating the p62-KEAP1-NRF2 signaling and particularly by modulating the ubiquitination levels and thus stability of NRF2. Acts as a scaffold protein and facilitates autophagic degradation of protein aggregates by interacting with p62/SQSTM, ATG16L1 and LC3B/MAP1LC3B. In turn, protects the cell against oxidative stress-induced cell death as a consequence of endomembrane damage. This Pongo abelii (Sumatran orangutan) protein is E3 ubiquitin-protein ligase TRIM16 (TRIM16).